A 1302-amino-acid chain; its full sequence is Serine-enriched protein (1302 aa).

Positions Cys40 to Pro158 constitute a BTB domain. Disordered regions lie at residues Ser325 to Thr532, Pro575 to Arg624, Phe648 to Met685, Tyr701 to Glu752, Phe834 to Asp858, Phe1045 to Asn1090, Phe1102 to Glu1163, and Val1187 to Pro1252. Residues Arg337–Arg364 are compositionally biased toward basic residues. 4 stretches are compositionally biased toward polar residues: residues Leu378–Asn388, Ser410–Ala430, Ser437–Arg449, and Gly472–Ser487. The span at Lys589 to Met623 shows a compositional bias: basic and acidic residues. Positions Ser664 to Ala680 are enriched in low complexity. Over residues Lys713–Lys723 the composition is skewed to basic and acidic residues. Polar residues predominate over residues Asp736–Gly748. Residues Arg836 to Asp855 show a composition bias toward basic and acidic residues. Low complexity-rich tracts occupy residues Arg1047 to Lys1056 and Ser1107 to Ser1128. Over residues Val1187–Thr1207 the composition is skewed to polar residues. Residues Ala1226–Pro1252 show a composition bias toward low complexity.

This Drosophila melanogaster (Fruit fly) protein is Serine-enriched protein (gprs).